Consider the following 520-residue polypeptide: Laccase-1 (520 aa).

The N-terminal stretch at Met-1 to Ala-19 is a signal peptide. Plastocyanin-like domains follow at residues Thr-21 to Tyr-145, Val-157 to Ala-305, and Thr-375 to Ala-488. Cu cation contacts are provided by His-82 and His-84. Intrachain disulfides connect Cys-103–Cys-509 and Cys-135–Cys-229. Asn-108 carries an N-linked (GlcNAc...) asparagine glycan. His-127 and His-129 together coordinate Cu cation. N-linked (GlcNAc...) asparagine glycans are attached at residues Asn-239 and Asn-299. Cu cation contacts are provided by His-417, His-420, His-422, His-470, Cys-471, His-472, and His-476. N-linked (GlcNAc...) asparagine glycosylation is present at Asn-492.

This sequence belongs to the multicopper oxidase family. Cu cation is required as a cofactor.

It is found in the secreted. The catalysed reaction is 4 hydroquinone + O2 = 4 benzosemiquinone + 2 H2O. In terms of biological role, lignin degradation and detoxification of lignin-derived products. The protein is Laccase-1 (lcc1) of Agaricus bisporus (White button mushroom).